A 529-amino-acid polypeptide reads, in one-letter code: Putative cysteine ligase BshC (529 aa).

A coiled-coil region spans residues Val450 to Leu485.

It belongs to the BshC family.

This Flavobacterium johnsoniae (strain ATCC 17061 / DSM 2064 / JCM 8514 / BCRC 14874 / CCUG 350202 / NBRC 14942 / NCIMB 11054 / UW101) (Cytophaga johnsonae) protein is Putative cysteine ligase BshC.